We begin with the raw amino-acid sequence, 427 residues long: MNTFSVSRLALALAFGVTLTACSSTPPDQRPSDQTAPGTSSRPILSAKEAQNFDAQHYFASLTPGAAAWNPSPITLPAQPDFVVGPAGTQGVTHTTIQAAVDAAIIKRTNKRQYIAVMPGEYQGTVYVPAAPGGITLYGTGEKPIDVKIGLSLDGGMSPADWRHDVNPRGKYMPGKPAWYMYDSCQSKRSDSIGVLCSAVFWSQNNGLQLQNLTIENTLGDSVDAGNHPAVALRTDGDQVQINNVNILGRQNTFFVTNSGVQNRLETNRQPRTLVTNSYIEGDVDIVSGRGAVVFDNTEFRVVNSRTQQEAYVFAPATLSNIYYGFLAVNSRFNAFGDGVAQLGRSLDVDANTNGQVVIRDSAINEGFNTAKPWADAVISNRPFAGNTGSVDDNDEIQRNLNDTNYNRMWEYNNRGVGSKVVAEAKK.

A signal peptide spans 1 to 21 (MNTFSVSRLALALAFGVTLTA). A lipid anchor (N-palmitoyl cysteine) is attached at C22. Residue C22 is the site of S-diacylglycerol cysteine attachment. Residues 23–42 (SSTPPDQRPSDQTAPGTSSR) form a disordered region. A disulfide bond links C185 and C197. The active-site Nucleophile is the D285. Position 345 (R345) interacts with substrate.

The protein belongs to the pectinesterase family.

It localises to the cell outer membrane. Its function is as follows. Putative thioesterase. Does not bind pectin, and has no pectinesterase activity. The protein is Putative acyl-CoA thioester hydrolase YbhC (ybhC) of Escherichia coli (strain K12).